Reading from the N-terminus, the 182-residue chain is 5-formyltetrahydrofolate cyclo-ligase (182 aa).

The interval Met-1–Ala-21 is disordered. Polar residues predominate over residues Pro-11–Ala-21. Residues Gly-128–Asp-135 and Asp-167 each bind ATP.

The protein belongs to the 5-formyltetrahydrofolate cyclo-ligase family.

It carries out the reaction (6S)-5-formyl-5,6,7,8-tetrahydrofolate + ATP = (6R)-5,10-methenyltetrahydrofolate + ADP + phosphate. It participates in one-carbon metabolism; tetrahydrofolate interconversion. In terms of biological role, involved in the removal of 5-formyltetrahydrofolate. In vitro, it is a potent inhibitor of various folate-dependent enzymes in the C1 metabolism network and in vivo it might function as a folate storage. 5-formyltetrahydrofolate is also used as an antifolate rescue agent in cancer chemotherapy. Catalyzes the irreversible ATP-dependent transformation of 5-formyltetrahydrofolate (5-CHO-THF) to form 5,10-methenyltetrahydrofolate (5,10-CH=THF). The reverse reaction is catalyzed by the serine hydroxymethyltransferase GlyA (SHMT). The chain is 5-formyltetrahydrofolate cyclo-ligase (ygfA) from Escherichia coli O157:H7.